Consider the following 106-residue polypeptide: Aspartyl/glutamyl-tRNA(Asn/Gln) amidotransferase subunit C (106 aa).

Belongs to the GatC family. As to quaternary structure, heterotrimer of A, B and C subunits.

The enzyme catalyses L-glutamyl-tRNA(Gln) + L-glutamine + ATP + H2O = L-glutaminyl-tRNA(Gln) + L-glutamate + ADP + phosphate + H(+). The catalysed reaction is L-aspartyl-tRNA(Asn) + L-glutamine + ATP + H2O = L-asparaginyl-tRNA(Asn) + L-glutamate + ADP + phosphate + 2 H(+). Its function is as follows. Allows the formation of correctly charged Asn-tRNA(Asn) or Gln-tRNA(Gln) through the transamidation of misacylated Asp-tRNA(Asn) or Glu-tRNA(Gln) in organisms which lack either or both of asparaginyl-tRNA or glutaminyl-tRNA synthetases. The reaction takes place in the presence of glutamine and ATP through an activated phospho-Asp-tRNA(Asn) or phospho-Glu-tRNA(Gln). The sequence is that of Aspartyl/glutamyl-tRNA(Asn/Gln) amidotransferase subunit C from Lactiplantibacillus plantarum (strain ATCC BAA-793 / NCIMB 8826 / WCFS1) (Lactobacillus plantarum).